A 302-amino-acid chain; its full sequence is Probable histone acetyltransferase Rv0428c (302 aa).

It carries out the reaction L-lysyl-[histone] + acetyl-CoA = N(6)-acetyl-L-lysyl-[histone] + CoA + H(+). Functionally, shows histone acetyl transferase (HAT) activity with recombinant eukaryotic H3 histone expressed in bacteria as substrate and acetyl-CoA as donor. May be involved in survival under stress conditions. The protein is Probable histone acetyltransferase Rv0428c of Mycobacterium tuberculosis (strain ATCC 25618 / H37Rv).